The chain runs to 204 residues: Small ribosomal subunit protein uS4 (204 aa).

In terms of domain architecture, S4 RNA-binding spans 93–156; that stretch reads SRLSSVLYHS…AKIPVIVEAV (64 aa).

Belongs to the universal ribosomal protein uS4 family. Part of the 30S ribosomal subunit. Contacts protein S5. The interaction surface between S4 and S5 is involved in control of translational fidelity.

Its function is as follows. One of the primary rRNA binding proteins, it binds directly to 16S rRNA where it nucleates assembly of the body of the 30S subunit. In terms of biological role, with S5 and S12 plays an important role in translational accuracy. This Wolbachia sp. subsp. Brugia malayi (strain TRS) protein is Small ribosomal subunit protein uS4.